Here is a 128-residue protein sequence, read N- to C-terminus: Small ribosomal subunit protein uS12 (128 aa).

Residues 1-30 are disordered; sequence MPTINQLIRKGREPKERKSKSPALMGNPQK. A 3-methylthioaspartic acid modification is found at aspartate 89. Residues 106-128 are disordered; it reads GVEGRKQGRSKYGTKRPKEGGKK.

Belongs to the universal ribosomal protein uS12 family. In terms of assembly, part of the 30S ribosomal subunit. Contacts proteins S8 and S17. May interact with IF1 in the 30S initiation complex.

Its function is as follows. With S4 and S5 plays an important role in translational accuracy. Functionally, interacts with and stabilizes bases of the 16S rRNA that are involved in tRNA selection in the A site and with the mRNA backbone. Located at the interface of the 30S and 50S subunits, it traverses the body of the 30S subunit contacting proteins on the other side and probably holding the rRNA structure together. The combined cluster of proteins S8, S12 and S17 appears to hold together the shoulder and platform of the 30S subunit. This Dictyoglomus thermophilum (strain ATCC 35947 / DSM 3960 / H-6-12) protein is Small ribosomal subunit protein uS12.